A 451-amino-acid polypeptide reads, in one-letter code: MKLKLIFSLFLVLVFCSLFVFGDENETEGQESRIDCRLVRCMAANCTEGQVPYKKKGECCESCMLDCSLVDCYTPKCKKGYYLKKPEGQCCQICQRECSAIQCGIPKCAPGYISQVPVGECCPTCVKKPVNPCALVLCPIVDCMIGWVPYKPEGECCTKCKQDCTTVKCAMPVCEDGATPTKNPNECCYKCPPVNCAAVQCLVPKCNANESLYTPPERCCPICRPNPTLDCTNTLCPIVDCMIGWVPYKPEGECCDRCKQDCTLVKCAMPVCEDGSKPIKNPNECCYKCPAVDCSTVRCMRPLCNENEHLYTPPGKCCPICRPNPNCTDAICPACVGHIEPGQCCPTCDTIPVGPDCTTVKCAMPVCEDGAKPTKNPNECCYKCPPVNCAAVQCPVPKCNANESLYTPPERCCPICRPNPDCTGIMCPECVGTKLPGQCCPTCDSIPVEMA.

A signal peptide spans 1–22 (MKLKLIFSLFLVLVFCSLFVFG). Asn-25, Asn-45, Asn-209, Asn-326, and Asn-402 each carry an N-linked (GlcNAc...) asparagine glycan.

The protein resides in the secreted. This is an uncharacterized protein from Dictyostelium discoideum (Social amoeba).